The following is a 202-amino-acid chain: Dephospho-CoA kinase (202 aa).

The 198-residue stretch at 3 to 200 (TIGLTGGIGS…QRYLTLAANR (198 aa)) folds into the DPCK domain. Residue 11–16 (GSGKSA) participates in ATP binding.

The protein belongs to the CoaE family.

The protein localises to the cytoplasm. The catalysed reaction is 3'-dephospho-CoA + ATP = ADP + CoA + H(+). It functions in the pathway cofactor biosynthesis; coenzyme A biosynthesis; CoA from (R)-pantothenate: step 5/5. Its function is as follows. Catalyzes the phosphorylation of the 3'-hydroxyl group of dephosphocoenzyme A to form coenzyme A. The polypeptide is Dephospho-CoA kinase (Thiobacillus denitrificans (strain ATCC 25259 / T1)).